Consider the following 299-residue polypeptide: AUGMIN subunit 1 (299 aa).

N-acetylserine is present on Ser2. Coiled coils occupy residues 76 to 96 and 164 to 184; these read RLKA…LESA and RKAI…EDDV.

Belongs to the HAUS1 family. In terms of assembly, part of the augmin complex composed of 8 subunits. The complex acts on microtubules and interacts with gamma-tubulin in spindles and the phragmoplast. Interacts with AUG3.

The protein localises to the cytoplasm. The protein resides in the cytoskeleton. Its subcellular location is the spindle. It localises to the phragmoplast. Functionally, involved in microtubules reorganization during spindle and phragmoplast development. In Arabidopsis thaliana (Mouse-ear cress), this protein is AUGMIN subunit 1.